Here is a 301-residue protein sequence, read N- to C-terminus: Phosphatidylserine decarboxylase proenzyme (301 aa).

Residues D117, H173, and S260 each act as charge relay system; for autoendoproteolytic cleavage activity in the active site. S260 (schiff-base intermediate with substrate; via pyruvic acid; for decarboxylase activity) is an active-site residue. S260 is modified (pyruvic acid (Ser); by autocatalysis).

The protein belongs to the phosphatidylserine decarboxylase family. PSD-B subfamily. Prokaryotic type II sub-subfamily. Heterodimer of a large membrane-associated beta subunit and a small pyruvoyl-containing alpha subunit. The cofactor is pyruvate. Is synthesized initially as an inactive proenzyme. Formation of the active enzyme involves a self-maturation process in which the active site pyruvoyl group is generated from an internal serine residue via an autocatalytic post-translational modification. Two non-identical subunits are generated from the proenzyme in this reaction, and the pyruvate is formed at the N-terminus of the alpha chain, which is derived from the carboxyl end of the proenzyme. The autoendoproteolytic cleavage occurs by a canonical serine protease mechanism, in which the side chain hydroxyl group of the serine supplies its oxygen atom to form the C-terminus of the beta chain, while the remainder of the serine residue undergoes an oxidative deamination to produce ammonia and the pyruvoyl prosthetic group on the alpha chain. During this reaction, the Ser that is part of the protease active site of the proenzyme becomes the pyruvoyl prosthetic group, which constitutes an essential element of the active site of the mature decarboxylase.

It localises to the cell membrane. It catalyses the reaction a 1,2-diacyl-sn-glycero-3-phospho-L-serine + H(+) = a 1,2-diacyl-sn-glycero-3-phosphoethanolamine + CO2. It participates in phospholipid metabolism; phosphatidylethanolamine biosynthesis; phosphatidylethanolamine from CDP-diacylglycerol: step 2/2. In terms of biological role, catalyzes the formation of phosphatidylethanolamine (PtdEtn) from phosphatidylserine (PtdSer). The polypeptide is Phosphatidylserine decarboxylase proenzyme (Chlamydia trachomatis serovar L2b (strain UCH-1/proctitis)).